Consider the following 187-residue polypeptide: Biphenyl 2,3-dioxygenase subunit beta (187 aa).

The protein belongs to the bacterial ring-hydroxylating dioxygenase beta subunit family. As to quaternary structure, heterohexamer consisting of three BphA1 subunits and three BphA2 subunits. The multicomponent biphenyl dioxygenase system is composed of a ferredoxin reductase (BphA4), a ferredoxin (BphA3), and a terminal oxygenase (BphA1A2).

The enzyme catalyses biphenyl + NADH + O2 + H(+) = (2R,3S)-3-phenylcyclohexa-3,5-diene-1,2-diol + NAD(+). It participates in xenobiotic degradation; biphenyl degradation; 2-hydroxy-2,4-pentadienoate and benzoate from biphenyl: step 1/4. Part of the oxygenase component of the biphenyl dioxygenase system that catalyzes the stereospecific dihydroxylation of the aromatic ring of biphenyl, yielding a dihydrodiol compound. Is likely involved in biphenyl degradation that allows growth of Rhodococcus sp. strain RHA1 on biphenyl as the sole source of carbon and energy. Can also use naphtalene and 4-chlorobiphenyl (4-CB) as substrates, as well as some polychlorinated biphenyls (PCB) such as 2,2'-dichlorobiphenyl, 2,3-dichlorobiphenyl and 2,5,2'-trichlorobiphenyl. Exhibits weak activity toward dibenzofuran and dibenzo-p-dioxin. Electrons are transferred from NADH to the [2Fe-2S] cluster in BphA1 via FAD of BphA4 and [2Fe-2S] cluster of BphA3. This chain is Biphenyl 2,3-dioxygenase subunit beta, found in Rhodococcus jostii (strain RHA1).